A 255-amino-acid chain; its full sequence is tRNA pseudouridine synthase A (255 aa).

Residue Asp-52 is the Nucleophile of the active site. Tyr-111 serves as a coordination point for substrate.

This sequence belongs to the tRNA pseudouridine synthase TruA family. As to quaternary structure, homodimer.

The enzyme catalyses uridine(38/39/40) in tRNA = pseudouridine(38/39/40) in tRNA. Its function is as follows. Formation of pseudouridine at positions 38, 39 and 40 in the anticodon stem and loop of transfer RNAs. The protein is tRNA pseudouridine synthase A of Nitrobacter winogradskyi (strain ATCC 25391 / DSM 10237 / CIP 104748 / NCIMB 11846 / Nb-255).